Consider the following 771-residue polypeptide: Endoplasmin homolog (771 aa).

Positions 1-24 are cleaved as a signal peptide; that stretch reads MANSSLLRVVLVALLLLGSVTVSA. ATP is bound by residues N63, D109, and F160. Residue N63 is glycosylated (N-linked (GlcNAc...) asparagine). Residues 254–282 are disordered; that stretch reads AATPESAAEERSLDEGAVEEDPDKEGDTQ. N306 and N402 each carry an N-linked (GlcNAc...) asparagine glycan. The interval 727–771 is disordered; sequence ADDSLLPPDDAEYTVSDTETEEEEEQPKVDTNAHEEAETDGEGDL. Basic and acidic residues predominate over residues 752–762; sequence QPKVDTNAHEE. The Prevents secretion from ER motif lies at 768 to 771; that stretch reads EGDL.

This sequence belongs to the heat shock protein 90 family. In terms of assembly, homotetramer.

It is found in the endoplasmic reticulum. In terms of biological role, molecular chaperone that functions in the processing and transport of secreted proteins. Required for the synthesis of lipophosphoglycan (LPG), a cell surface glycoconjugate. Necessary for the attachment of the galactosyl residue to the mannose within the phosphoglycan repeats of the nascent LPG chain. Also required for addition of phosphoglycan to acid phosphatase. Not required for normal growth. Has ATPase activity. Binds heparin with micromolar affinity which may facilitate infection of host cells. In Leishmania donovani, this protein is Endoplasmin homolog.